We begin with the raw amino-acid sequence, 318 residues long: Olfactory receptor 13C7 (318 aa).

The Extracellular segment spans residues 1 to 27; it reads MVSANQTASVTEFILLGLSAHPKLEKT. Residues 28 to 48 form a helical membrane-spanning segment; that stretch reads FFVLILLMYLVILLGNGVLIL. The Cytoplasmic segment spans residues 49-61; it reads MTVSNSHLHMPMY. A helical transmembrane segment spans residues 62–82; the sequence is FFLGNLSFLDICYTTSSVPLI. The Extracellular portion of the chain corresponds to 83 to 100; it reads LDSFLTPRKTISFSACAV. A helical membrane pass occupies residues 101–121; that stretch reads QMFLSFAMGATECVLLSMMAF. The Cytoplasmic portion of the chain corresponds to 122–181; it reads DRYVAICNPLRYPVVMSKAAYMPKAAGSWVAGSTASMVQTSLAMRLPFCGDNIINHFTCE. A helical membrane pass occupies residues 182–202; the sequence is ILAVLKLACADISVNVISMGV. The Extracellular portion of the chain corresponds to 203–205; the sequence is TNV. The chain crosses the membrane as a helical span at residues 206–226; sequence IFLGVPVLFISFSYVFIIATI. Over 227 to 238 the chain is Cytoplasmic; sequence LRIPSAEGRKKA. Residues 239–259 traverse the membrane as a helical segment; the sequence is FSTCSAHLTVVVIFYGTILFM. The Extracellular portion of the chain corresponds to 260-278; the sequence is YGKPKSKDPLGADKQDLAD. A helical transmembrane segment spans residues 279-289; that stretch reads KLISLFYGVVT. At 290–318 the chain is on the cytoplasmic side; sequence PMLNPIIYSLRNKDVKAAVRDLIFQKCFA.

Belongs to the G-protein coupled receptor 1 family.

The protein localises to the cell membrane. Odorant receptor. This is Olfactory receptor 13C7 from Homo sapiens (Human).